The primary structure comprises 333 residues: tRNA dimethylallyltransferase (333 aa).

23–30 (GPTGAGKT) serves as a coordination point for ATP. 25–30 (TGAGKT) is a substrate binding site. 2 interaction with substrate tRNA regions span residues 53-56 (DSAL) and 177-181 (QRVQR).

The protein belongs to the IPP transferase family. Monomer. It depends on Mg(2+) as a cofactor.

The enzyme catalyses adenosine(37) in tRNA + dimethylallyl diphosphate = N(6)-dimethylallyladenosine(37) in tRNA + diphosphate. Catalyzes the transfer of a dimethylallyl group onto the adenine at position 37 in tRNAs that read codons beginning with uridine, leading to the formation of N6-(dimethylallyl)adenosine (i(6)A). This chain is tRNA dimethylallyltransferase, found in Polynucleobacter asymbioticus (strain DSM 18221 / CIP 109841 / QLW-P1DMWA-1) (Polynucleobacter necessarius subsp. asymbioticus).